Consider the following 35-residue polypeptide: ACLGFGKSCNPSNDQCCKSSSLACSTKHKWCKYEL.

Cystine bridges form between Cys-2–Cys-17, Cys-9–Cys-24, and Cys-16–Cys-31.

The protein belongs to the neurotoxin 10 (Hwtx-1) family. 22 (Htx-4) subfamily. In terms of tissue distribution, expressed by the venom gland.

It localises to the secreted. Functionally, gating-modifier toxin that reversibly and voltage-independently inhibits human Nav1.1/SCN1A and Nav1.7/SCN9A (IC(50)=111 nM). It also shows moderate inhibition on Nav1.2/SCN2A (1 uM inhibits current by 55%), Nav1.6/SCN8A (31%), Nav1.3/SCN5A (27%) and Nav1.4/SCN4A (23%). This toxin inhibits Nav1.7/SCN9A by interacting with the S3b-S4 paddle motif in channel domain II. The protein is Mu-theraphotoxin-Hd1a of Cyriopagopus doriae (Tarantula spider).